Here is a 130-residue protein sequence, read N- to C-terminus: Small ribosomal subunit protein uS8 (130 aa).

The protein belongs to the universal ribosomal protein uS8 family. As to quaternary structure, part of the 30S ribosomal subunit. Contacts proteins S5 and S12.

Its function is as follows. One of the primary rRNA binding proteins, it binds directly to 16S rRNA central domain where it helps coordinate assembly of the platform of the 30S subunit. This is Small ribosomal subunit protein uS8 from Vibrio cholerae serotype O1 (strain ATCC 39541 / Classical Ogawa 395 / O395).